A 520-amino-acid chain; its full sequence is ATP-dependent clpX-like chaperone, mitochondrial (520 aa).

Residues 1–13 (MLKSASQNFFRAY) constitute a mitochondrion transit peptide. 140–147 (GPSGSGKT) is an ATP binding site.

It belongs to the ClpX chaperone family. In terms of assembly, homohexamer that forms a ring structure; this hexamerization requires ATP binding. Interacts with HEM1.

Its subcellular location is the mitochondrion inner membrane. Functionally, ATP-dependent unfoldase that stimulates the incorporation of the pyridoxal phosphate cofactor into 5-aminolevulinate synthase (HEM1), thereby activating 5-aminolevulinate (ALA) synthesis, the first step in heme biosynthesis. Up-regulates heme biosynthesis. In Saccharomyces cerevisiae (strain ATCC 204508 / S288c) (Baker's yeast), this protein is ATP-dependent clpX-like chaperone, mitochondrial.